The chain runs to 136 residues: 2-hydroxyisobutanoyl-CoA mutase small subunit (136 aa).

The B12-binding domain occupies 5–133 (PIRVLLAKVG…DSIRSLVAAR (129 aa)). Histidine 18 contacts adenosylcob(III)alamin.

Belongs to the acyl-CoA mutase small subunit family. As to quaternary structure, homotetramer composed of two large substrate-binding subunits (HcmA) and two small cobalamin-binding subunits (HcmB). Adenosylcob(III)alamin is required as a cofactor.

The enzyme catalyses 2-hydroxyisobutanoyl-CoA = (3S)-3-hydroxybutanoyl-CoA. Together with HcmA, catalyzes the isomerization of 2-hydroxyisobutyryl-CoA and 3-hydroxybutyryl-CoA. Is specific for 2-hydroxyisobutyryl-CoA and (S)-3-hydroxybutyryl-CoA, and shows only very low activity with (R)-3-hydroxybutyryl-CoA, isobutyryl-CoA and butyryl-CoA. In vitro, can isomerize pivalyl-CoA and isovaleryl-CoA, with much lower efficiency. Plays a central role in the degradation of substrates bearing a tert-butyl moiety, such as the fuel oxygenate methyl tert-butyl ether (MTBE) and its metabolites. This chain is 2-hydroxyisobutanoyl-CoA mutase small subunit, found in Aquincola tertiaricarbonis.